Reading from the N-terminus, the 60-residue chain is Large ribosomal subunit protein bL32 (60 aa).

Residues 1–22 (MAVPKKKTSKSRRDMRRSHHAL) are compositionally biased toward basic residues. The segment at 1 to 27 (MAVPKKKTSKSRRDMRRSHHALKGSAY) is disordered.

It belongs to the bacterial ribosomal protein bL32 family.

In Rhodospirillum centenum (strain ATCC 51521 / SW), this protein is Large ribosomal subunit protein bL32.